A 120-amino-acid polypeptide reads, in one-letter code: Large ribosomal subunit protein uL18 (120 aa).

Belongs to the universal ribosomal protein uL18 family. Part of the 50S ribosomal subunit; part of the 5S rRNA/L5/L18/L25 subcomplex. Contacts the 5S and 23S rRNAs.

In terms of biological role, this is one of the proteins that bind and probably mediate the attachment of the 5S RNA into the large ribosomal subunit, where it forms part of the central protuberance. This Bacillus cereus (strain AH820) protein is Large ribosomal subunit protein uL18.